Reading from the N-terminus, the 180-residue chain is Large ribosomal subunit protein uL6 (180 aa).

This sequence belongs to the universal ribosomal protein uL6 family. Part of the 50S ribosomal subunit.

Functionally, this protein binds to the 23S rRNA, and is important in its secondary structure. It is located near the subunit interface in the base of the L7/L12 stalk, and near the tRNA binding site of the peptidyltransferase center. The sequence is that of Large ribosomal subunit protein uL6 from Borreliella afzelii (strain PKo) (Borrelia afzelii).